The chain runs to 612 residues: MSSFNSNSNPANAQNLSSFQFQPPKEDVIFDTHQMSLSVPQSRYYASSMMQQSQQGQPQSQTSQQQQQQPFLMNIPPAFTQTQPQQMLYAMPPLQTQQPSSSSATTNNVVPPHHYNQQQSQQQQQQQQQYQQMQPQPNNMQFFDNTIPNYLIMNQTISPSQTQTTAQPNISYYNYSTQPQLQSAQPISHSQPQPQPQATQPRSNRSRSQTSFSKPRGSRQVSGSGRSTGAKKQSAITSGSTGTGPARNADTGMTSVANSTSTTTMTTTNNNNKLSVSAPVNVIYANLPERLQQVLPAPPLSRAPVRPDVTVNLTSKRAKRKSKFTPEQDDMIVNLKKKGKSWVEIAEITGVGSYLAARNRFQVIVGQQGNNNSSAWDNTDKLFLNQLLDAGEIEKWRFICCELNKSTNKNFTDYECREMIRQLFWLNPASFGVNEETIIESQKEKKLTEKTIEQREQQRKKRASANHSPPDSDSITNTNNNQQEVKYIDPQYKNYQSQLMPNQNTGSGATKISSTTPPPPSQALSNNVNTMNKNIVSSALGGTSFSQEQHSLHSNQHHHNHQQHPLIHHHQYQQQSSLPPPPTIPSTIPTSSLSIQQQQQQQQQQLYNKQFY.

Composition is skewed to low complexity over residues 1–18 (MSSF…NLSS), 47–68 (SSMM…QQQQ), 94–106 (LQTQ…SATT), 115–141 (YNQQ…NNMQ), 182–203 (QSAQ…QPRS), and 218–228 (SRQVSGSGRST). Disordered stretches follow at residues 1 to 20 (MSSF…SSFQ), 46 to 68 (ASSM…QQQQ), 94 to 143 (LQTQ…MQFF), 179 to 273 (PQLQ…NNNK), 443 to 480 (KEKK…NTNN), 497 to 527 (SQLM…LSNN), and 546 to 612 (SQEQ…KQFY). Polar residues predominate over residues 230–240 (AKKQSAITSGS). The span at 254-272 (TSVANSTSTTTMTTTNNNN) shows a compositional bias: low complexity. Residues 443-457 (KEKKLTEKTIEQREQ) show a composition bias toward basic and acidic residues. 2 stretches are compositionally biased toward polar residues: residues 465–480 (ANHS…NTNN) and 497–512 (SQLM…ATKI). Basic residues predominate over residues 555-571 (NQHHHNHQQHPLIHHHQ). Over residues 585–606 (PSTIPTSSLSIQQQQQQQQQQL) the composition is skewed to low complexity.

Functionally, surface antigen mediating adhesion and aggregation in S.cerevisiae. The sequence is that of Adherence factor (ADF1) from Candida albicans (strain SC5314 / ATCC MYA-2876) (Yeast).